The chain runs to 68 residues: 1-carboxybiuret hydrolase subunit AtzG (68 aa).

In terms of assembly, heterotetramer consisting of 2 AtzE and 2 AtzG subunits.

Its pathway is xenobiotic degradation; atrazine degradation. Important for the activity of the AtzE subunit of 1-carboxybiuret hydrolase. This is 1-carboxybiuret hydrolase subunit AtzG from Pseudomonas sp. (strain ADP).